The following is a 365-amino-acid chain: Magnesium-chelatase subunit ChlI homolog (365 aa).

E40–T47 is a binding site for ATP. The interval F340–K365 is disordered. Residues N344–K365 show a composition bias toward basic and acidic residues.

Belongs to the Mg-chelatase subunits D/I family.

In Methanocaldococcus jannaschii (strain ATCC 43067 / DSM 2661 / JAL-1 / JCM 10045 / NBRC 100440) (Methanococcus jannaschii), this protein is Magnesium-chelatase subunit ChlI homolog.